The sequence spans 78 residues: High temperature lethal protein 1 (78 aa).

S2 is subject to N-acetylserine.

In terms of assembly, interacts directly with RSC8. Component of the two forms of the RSC complex composed of at least either RSC1 or RSC2, and ARP7, ARP9, LDB7, NPL6, RSC3, RSC30, RSC4, RSC58, RSC6, RSC8, RSC9, SFH1, STH1, HTL1 and probably RTT102. The complexes interact with histone and histone variant components of centromeric chromatin. Component of a fungal-specific module (HTL1-LDB7-NPL6-RSC3-RSC30) within the RSC complex.

The protein localises to the nucleus. Functionally, required for cell cycle progression through G2/M transition at temperatures higher than 33 degrees Celsius. Component of the chromatin structure-remodeling complex (RSC), which is involved in transcription regulation and nucleosome positioning. RSC is responsible for the transfer of a histone octamer from a nucleosome core particle to naked DNA. The reaction requires ATP and involves an activated RSC-nucleosome intermediate. Remodeling reaction also involves DNA translocation, DNA twist and conformational change. As a reconfigurer of centromeric and flanking nucleosomes, RSC complex is required both for proper kinetochore function in chromosome segregation and, via a PKC1-dependent signaling pathway, for organization of the cellular cytoskeleton. When associated with the RSC complex, may act coordinately with PKC1 to regulate G2/M transition. Together with LDB7, NPL6, RSC3, RSC30 components, defines a fungal-specific module within the RSC complex that plays a role in many cellular functions including the maintenance of cell wall integrity. The protein is High temperature lethal protein 1 (HTL1) of Saccharomyces cerevisiae (strain ATCC 204508 / S288c) (Baker's yeast).